The following is a 228-amino-acid chain: MASTASEIIAFMVSISGWVLVSSTLPTDYWKVSTIDGTVITTATYWANLWKACVTDSTGVSNCKDFPSMLALDGYIQACRGLMIAAVSLGFFGSIFALFGMKCTKVGGSDKAKAKIACLAGIVFILSGLCSMTGCSLYANKITTEFFDPLFVEQKYELGAALFIGWAGASLCIIGGVIFCFSISDNNKTPRYTYNGATSVMSSRTKYHGGEDFKTTNPSKQFDKNAYV.

Residues 1-21 (MASTASEIIAFMVSISGWVLV) form a helical membrane-spanning segment. Topologically, residues 22 to 80 (SSTLPTDYWKVSTIDGTVITTATYWANLWKACVTDSTGVSNCKDFPSMLALDGYIQACR) are extracellular. Residues 81 to 101 (GLMIAAVSLGFFGSIFALFGM) traverse the membrane as a helical segment. Residues 102–115 (KCTKVGGSDKAKAK) lie on the Cytoplasmic side of the membrane. Residues 116 to 136 (IACLAGIVFILSGLCSMTGCS) form a helical membrane-spanning segment. Topologically, residues 137-160 (LYANKITTEFFDPLFVEQKYELGA) are extracellular. A helical transmembrane segment spans residues 161–181 (ALFIGWAGASLCIIGGVIFCF). The Cytoplasmic segment spans residues 182 to 228 (SISDNNKTPRYTYNGATSVMSSRTKYHGGEDFKTTNPSKQFDKNAYV).

It belongs to the claudin family. As to quaternary structure, can form homodimers both in trans (interaction between CLDN10 molecules in opposing membranes) and in cis (interaction between CLDN10 molecules within one membrane). In terms of assembly, interacts with CLDN19. Expressed in the kidney, eccrine sweat glands and in all layers of the epidermis. In the kidney, it is detected in the thick ascending limb of Henle's loop (TAL). In the sweat glands, it is expressed in cells from secretory portions, corresponding to the clear cells.

It is found in the cell junction. The protein resides in the tight junction. The protein localises to the cell membrane. It catalyses the reaction Na(+)(in) = Na(+)(out). The enzyme catalyses Li(+)(in) = Li(+)(out). It carries out the reaction K(+)(in) = K(+)(out). The catalysed reaction is Rb(+)(in) = Rb(+)(out). It catalyses the reaction Cs(+)(in) = Cs(+)(out). The enzyme catalyses NH4(+)(in) = NH4(+)(out). It carries out the reaction methylamine(out) = methylamine(in). The catalysed reaction is Mg(2+)(in) = Mg(2+)(out). It catalyses the reaction Ca(2+)(in) = Ca(2+)(out). The enzyme catalyses Sr(2+)(in) = Sr(2+)(out). It carries out the reaction chloride(in) = chloride(out). The catalysed reaction is nitrate(in) = nitrate(out). Forms paracellular channels: polymerizes in tight junction strands with cation- and anion-selective channels through the strands, conveying epithelial permeability in a process known as paracellular tight junction permeability. In terms of biological role, forms cation-selective paracellular channels. In sweat glands and in the thick ascending limb (TAL) of Henle's loop in kidney, it controls paracellular sodium permeability which is essential for proper sweat production and renal function. Its function is as follows. Forms anion-selective paracellular channels. In renal proximal tubules, it conveys selective chloride over hydrogencarbonate anion permeability which is required for renal chloride reabsorption and salt homeostasis. The chain is Claudin-10 from Homo sapiens (Human).